The chain runs to 407 residues: Proteasome-activating nucleotidase (407 aa).

The stretch at 22–67 forms a coiled coil; it reads KEKTQIAELESKVLRLELKNKDVTRENVQIKKENEILKRELDKLRI. ATP contacts are provided by residues 192–197 and His-331; that span reads GTGKTL. The interval 405 to 407 is docks into pockets in the proteasome alpha-ring to cause gate opening; sequence MYG.

The protein belongs to the AAA ATPase family. In terms of assembly, homohexamer. The hexameric complex has a two-ring architecture resembling a top hat that caps the 20S proteasome core at one or both ends. Upon ATP-binding, the C-terminus of PAN interacts with the alpha-rings of the proteasome core by binding to the intersubunit pockets.

It is found in the cytoplasm. ATPase which is responsible for recognizing, binding, unfolding and translocation of substrate proteins into the archaeal 20S proteasome core particle. Is essential for opening the gate of the 20S proteasome via an interaction with its C-terminus, thereby allowing substrate entry and access to the site of proteolysis. Thus, the C-termini of the proteasomal ATPase function like a 'key in a lock' to induce gate opening and therefore regulate proteolysis. Unfolding activity requires energy from ATP hydrolysis, whereas ATP binding alone promotes ATPase-20S proteasome association which triggers gate opening, and supports translocation of unfolded substrates. This Methanococcus maripaludis (strain C7 / ATCC BAA-1331) protein is Proteasome-activating nucleotidase.